We begin with the raw amino-acid sequence, 117 residues long: Small ribosomal subunit protein bS6m (117 aa).

Belongs to the bacterial ribosomal protein bS6 family. As to quaternary structure, component of the mitochondrial small ribosomal subunit (mt-SSU). Mature N.crassa 74S mitochondrial ribosomes consist of a small (37S) and a large (54S) subunit. The 37S small subunit contains a 16S ribosomal RNA (16S mt-rRNA) and 32 different proteins. The 54S large subunit contains a 23S rRNA (23S mt-rRNA) and 42 different proteins.

The protein resides in the mitochondrion. Its function is as follows. Component of the mitochondrial ribosome (mitoribosome), a dedicated translation machinery responsible for the synthesis of mitochondrial genome-encoded proteins, including at least some of the essential transmembrane subunits of the mitochondrial respiratory chain. The mitoribosomes are attached to the mitochondrial inner membrane and translation products are cotranslationally integrated into the membrane. This Neurospora crassa (strain ATCC 24698 / 74-OR23-1A / CBS 708.71 / DSM 1257 / FGSC 987) protein is Small ribosomal subunit protein bS6m (mrp17).